Consider the following 177-residue polypeptide: Large ribosomal subunit protein uL6 (177 aa).

The residue at position 44 (Lys-44) is an N6-acetyllysine.

The protein belongs to the universal ribosomal protein uL6 family. In terms of assembly, part of the 50S ribosomal subunit.

Its function is as follows. This protein binds to the 23S rRNA, and is important in its secondary structure. It is located near the subunit interface in the base of the L7/L12 stalk, and near the tRNA binding site of the peptidyltransferase center. In Escherichia coli O139:H28 (strain E24377A / ETEC), this protein is Large ribosomal subunit protein uL6.